The primary structure comprises 455 residues: Chromosomal replication initiator protein DnaA (455 aa).

The segment at 1-75 (MDTNNNIEKE…EILSQNKVGM (75 aa)) is domain I, interacts with DnaA modulators. Positions 75-106 (MHLAHSVDVRIEVAPKIQISAQPNINYKAVKT) are domain II. A domain III, AAA+ region region spans residues 107-321 (SVKDSYTFEN…GAIIKISVNA (215 aa)). Residues Gly151, Gly153, Lys154, and Thr155 each coordinate ATP. Residues 322–455 (NLMNAPIDLN…DKKTAFHSSE (134 aa)) are domain IV, binds dsDNA.

The protein belongs to the DnaA family. Oligomerizes as a right-handed, spiral filament on DNA at oriC.

The protein resides in the cytoplasm. Plays an essential role in the initiation and regulation of chromosomal replication. ATP-DnaA binds to the origin of replication (oriC) to initiate formation of the DNA replication initiation complex once per cell cycle. Binds the DnaA box (a 9 base pair repeat at the origin) and separates the double-stranded (ds)DNA. Forms a right-handed helical filament on oriC DNA; dsDNA binds to the exterior of the filament while single-stranded (ss)DNA is stabiized in the filament's interior. The ATP-DnaA-oriC complex binds and stabilizes one strand of the AT-rich DNA unwinding element (DUE), permitting loading of DNA polymerase. After initiation quickly degrades to an ADP-DnaA complex that is not apt for DNA replication. Binds acidic phospholipids. The chain is Chromosomal replication initiator protein DnaA from Helicobacter pylori (strain Shi470).